Consider the following 396-residue polypeptide: Ribosomal RNA large subunit methyltransferase I (396 aa).

Residues 2–81 (SVRLVLAKGR…ETIDIAFFTR (80 aa)) enclose the PUA domain.

The protein belongs to the methyltransferase superfamily. RlmI family.

The protein localises to the cytoplasm. The enzyme catalyses cytidine(1962) in 23S rRNA + S-adenosyl-L-methionine = 5-methylcytidine(1962) in 23S rRNA + S-adenosyl-L-homocysteine + H(+). Specifically methylates the cytosine at position 1962 (m5C1962) of 23S rRNA. This is Ribosomal RNA large subunit methyltransferase I from Cronobacter sakazakii (strain ATCC BAA-894) (Enterobacter sakazakii).